The sequence spans 753 residues: Nigerose phosphorylase (753 aa).

Substrate is bound at residue 348–349 (WD). The active-site Proton donor is Glu-490. 604–605 (KQ) serves as a coordination point for substrate.

The protein belongs to the glycosyl hydrolase 65 family. Homodimer.

The protein localises to the cytoplasm. The enzyme catalyses nigerose + phosphate = beta-D-glucose 1-phosphate + D-glucose. With respect to regulation, does not require divalent metal ions. In terms of biological role, catalyzes the reversible phosphorolysis of nigerose. Also shows a weak activity on kojibiose. This chain is Nigerose phosphorylase, found in Lachnoclostridium phytofermentans (strain ATCC 700394 / DSM 18823 / ISDg) (Clostridium phytofermentans).